The chain runs to 543 residues: uncharacterized protein (543 aa).

The 258-residue stretch at 203 to 460 folds into the Radical SAM core domain; it reads NYPYIIAEIE…FLWFKEKVRE (258 aa). Residues 470-534 enclose the TRAM domain; that stretch reads VVPKGTILRD…RRSITGKVVR (65 aa).

This is an uncharacterized protein from Methanocaldococcus jannaschii (strain ATCC 43067 / DSM 2661 / JAL-1 / JCM 10045 / NBRC 100440) (Methanococcus jannaschii).